A 351-amino-acid polypeptide reads, in one-letter code: Phospho-N-acetylmuramoyl-pentapeptide-transferase (351 aa).

The next 10 helical transmembrane spans lie at 17–37 (MAYATIFAFLLSLIVGPYIIL), 62–82 (GIPTMGGILIFFCVFISLVFW), 85–105 (ILNVYFLIMVFVMLGFAFLGF), 130–150 (IIFSFFSVGILYYFGGEHVSV), 158–178 (SFQIDLGLFYIPFGMFILISA), 190–210 (GLAIGLSIVITGALIIIAYLT), 230–250 (LVIFLGALLGGSFGFLWFNAY), 254–274 (IMMGDTGSLALGAILGMAALI), 279–299 (ILFSILAGVFIIETMSVIIQV), and 328–348 (QVVIRFWIIGLIFAIIALSTI).

It belongs to the glycosyltransferase 4 family. MraY subfamily. It depends on Mg(2+) as a cofactor.

It localises to the cell inner membrane. The catalysed reaction is UDP-N-acetyl-alpha-D-muramoyl-L-alanyl-gamma-D-glutamyl-meso-2,6-diaminopimeloyl-D-alanyl-D-alanine + di-trans,octa-cis-undecaprenyl phosphate = di-trans,octa-cis-undecaprenyl diphospho-N-acetyl-alpha-D-muramoyl-L-alanyl-D-glutamyl-meso-2,6-diaminopimeloyl-D-alanyl-D-alanine + UMP. It functions in the pathway cell wall biogenesis; peptidoglycan biosynthesis. In terms of biological role, catalyzes the initial step of the lipid cycle reactions in the biosynthesis of the cell wall peptidoglycan: transfers peptidoglycan precursor phospho-MurNAc-pentapeptide from UDP-MurNAc-pentapeptide onto the lipid carrier undecaprenyl phosphate, yielding undecaprenyl-pyrophosphoryl-MurNAc-pentapeptide, known as lipid I. This chain is Phospho-N-acetylmuramoyl-pentapeptide-transferase, found in Borreliella burgdorferi (strain ATCC 35210 / DSM 4680 / CIP 102532 / B31) (Borrelia burgdorferi).